The sequence spans 343 residues: L-threonine 3-dehydrogenase (343 aa).

Cys-38 is a binding site for Zn(2+). Active-site charge relay system residues include Thr-40 and His-43. Positions 63, 64, 93, 96, 99, and 107 each coordinate Zn(2+). NAD(+) contacts are provided by residues Ile-175, Asp-195, Arg-200, 262-264 (LGL), and 286-287 (IY).

It belongs to the zinc-containing alcohol dehydrogenase family. As to quaternary structure, homotetramer. Zn(2+) serves as cofactor.

It is found in the cytoplasm. It catalyses the reaction L-threonine + NAD(+) = (2S)-2-amino-3-oxobutanoate + NADH + H(+). It participates in amino-acid degradation; L-threonine degradation via oxydo-reductase pathway; glycine from L-threonine: step 1/2. Catalyzes the NAD(+)-dependent oxidation of L-threonine to 2-amino-3-ketobutyrate. This Saccharopolyspora erythraea (strain ATCC 11635 / DSM 40517 / JCM 4748 / NBRC 13426 / NCIMB 8594 / NRRL 2338) protein is L-threonine 3-dehydrogenase.